The primary structure comprises 660 residues: Bifunctional polymyxin resistance protein ArnA (660 aa).

Positions 1-304 (MKTVVFAYHD…MLGLVQGSRL (304 aa)) are formyltransferase ArnAFT. 86–88 (HLI) is a binding site for (6R)-10-formyltetrahydrofolate. The Proton donor; for formyltransferase activity role is filled by histidine 104. Residues arginine 114 and 136–140 (VKRAD) contribute to the (6R)-10-formyltetrahydrofolate site. Residues 314–660 (RRTRVLILGV…RTVDLTDKPS (347 aa)) are dehydrogenase ArnADH. NAD(+) contacts are provided by residues aspartate 347 and 368–369 (DI). UDP-alpha-D-glucuronate-binding positions include alanine 393, tyrosine 398, and 432 to 433 (TS). The active-site Proton acceptor; for decarboxylase activity is the glutamate 434. UDP-alpha-D-glucuronate is bound by residues arginine 460, asparagine 492, 526-535 (KLIDGGKQKR), and tyrosine 613. Arginine 619 acts as the Proton donor; for decarboxylase activity in catalysis.

It in the N-terminal section; belongs to the Fmt family. UDP-L-Ara4N formyltransferase subfamily. The protein in the C-terminal section; belongs to the NAD(P)-dependent epimerase/dehydratase family. UDP-glucuronic acid decarboxylase subfamily. Homohexamer, formed by a dimer of trimers.

It carries out the reaction UDP-alpha-D-glucuronate + NAD(+) = UDP-beta-L-threo-pentopyranos-4-ulose + CO2 + NADH. The catalysed reaction is UDP-4-amino-4-deoxy-beta-L-arabinose + (6R)-10-formyltetrahydrofolate = UDP-4-deoxy-4-formamido-beta-L-arabinose + (6S)-5,6,7,8-tetrahydrofolate + H(+). Its pathway is nucleotide-sugar biosynthesis; UDP-4-deoxy-4-formamido-beta-L-arabinose biosynthesis; UDP-4-deoxy-4-formamido-beta-L-arabinose from UDP-alpha-D-glucuronate: step 1/3. It participates in nucleotide-sugar biosynthesis; UDP-4-deoxy-4-formamido-beta-L-arabinose biosynthesis; UDP-4-deoxy-4-formamido-beta-L-arabinose from UDP-alpha-D-glucuronate: step 3/3. It functions in the pathway bacterial outer membrane biogenesis; lipopolysaccharide biosynthesis. Bifunctional enzyme that catalyzes the oxidative decarboxylation of UDP-glucuronic acid (UDP-GlcUA) to UDP-4-keto-arabinose (UDP-Ara4O) and the addition of a formyl group to UDP-4-amino-4-deoxy-L-arabinose (UDP-L-Ara4N) to form UDP-L-4-formamido-arabinose (UDP-L-Ara4FN). The modified arabinose is attached to lipid A and is required for resistance to polymyxin and cationic antimicrobial peptides. The sequence is that of Bifunctional polymyxin resistance protein ArnA from Shigella sonnei (strain Ss046).